The primary structure comprises 140 residues: Nucleoside diphosphate kinase (140 aa).

Positions 11, 59, 87, 93, 104, and 114 each coordinate ATP. H117 (pros-phosphohistidine intermediate) is an active-site residue.

The protein belongs to the NDK family. As to quaternary structure, homotetramer. Requires Mg(2+) as cofactor.

The protein resides in the cytoplasm. It catalyses the reaction a 2'-deoxyribonucleoside 5'-diphosphate + ATP = a 2'-deoxyribonucleoside 5'-triphosphate + ADP. The catalysed reaction is a ribonucleoside 5'-diphosphate + ATP = a ribonucleoside 5'-triphosphate + ADP. Its function is as follows. Major role in the synthesis of nucleoside triphosphates other than ATP. The ATP gamma phosphate is transferred to the NDP beta phosphate via a ping-pong mechanism, using a phosphorylated active-site intermediate. This chain is Nucleoside diphosphate kinase, found in Chelativorans sp. (strain BNC1).